The chain runs to 273 residues: Dermonecrotic toxin SdSicTox-betaIF1 (273 aa).

The active site involves His-5. Glu-25 and Asp-27 together coordinate Mg(2+). His-41 serves as the catalytic Nucleophile. Disulfide bonds link Cys-45/Cys-51 and Cys-47/Cys-189.

It belongs to the arthropod phospholipase D family. Class II subfamily. It depends on Mg(2+) as a cofactor. In terms of tissue distribution, expressed by the venom gland.

It is found in the secreted. The enzyme catalyses an N-(acyl)-sphingosylphosphocholine = an N-(acyl)-sphingosyl-1,3-cyclic phosphate + choline. It carries out the reaction an N-(acyl)-sphingosylphosphoethanolamine = an N-(acyl)-sphingosyl-1,3-cyclic phosphate + ethanolamine. It catalyses the reaction a 1-acyl-sn-glycero-3-phosphocholine = a 1-acyl-sn-glycero-2,3-cyclic phosphate + choline. The catalysed reaction is a 1-acyl-sn-glycero-3-phosphoethanolamine = a 1-acyl-sn-glycero-2,3-cyclic phosphate + ethanolamine. In terms of biological role, dermonecrotic toxins cleave the phosphodiester linkage between the phosphate and headgroup of certain phospholipids (sphingolipid and lysolipid substrates), forming an alcohol (often choline) and a cyclic phosphate. This toxin acts on sphingomyelin (SM). It may also act on ceramide phosphoethanolamine (CPE), lysophosphatidylcholine (LPC) and lysophosphatidylethanolamine (LPE), but not on lysophosphatidylserine (LPS), and lysophosphatidylglycerol (LPG). It acts by transphosphatidylation, releasing exclusively cyclic phosphate products as second products. Induces dermonecrosis, hemolysis, increased vascular permeability, edema, inflammatory response, and platelet aggregation. The protein is Dermonecrotic toxin SdSicTox-betaIF1 of Sicarius cf. damarensis (strain GJB-2008) (Six-eyed sand spider).